Consider the following 326-residue polypeptide: Probable pectate lyase B (326 aa).

A signal peptide spans methionine 1 to alanine 15. 3 residues coordinate Ca(2+): aspartate 133, aspartate 162, and aspartate 166. The active site involves arginine 219.

This sequence belongs to the polysaccharide lyase 1 family. Ca(2+) serves as cofactor.

The protein resides in the secreted. The enzyme catalyses Eliminative cleavage of (1-&gt;4)-alpha-D-galacturonan to give oligosaccharides with 4-deoxy-alpha-D-galact-4-enuronosyl groups at their non-reducing ends.. Functionally, pectinolytic enzyme consist of four classes of enzymes: pectin lyase, polygalacturonase, pectin methylesterase and rhamnogalacturonase. Among pectinolytic enzymes, pectin lyase is the most important in depolymerization of pectin, since it cleaves internal glycosidic bonds of highly methylated pectins. Favors pectate, the anion, over pectin, the methyl ester. The polypeptide is Probable pectate lyase B (plyB) (Aspergillus flavus (strain ATCC 200026 / FGSC A1120 / IAM 13836 / NRRL 3357 / JCM 12722 / SRRC 167)).